Consider the following 215-residue polypeptide: ATP phosphoribosyltransferase (215 aa).

It belongs to the ATP phosphoribosyltransferase family. Short subfamily. As to quaternary structure, heteromultimer composed of HisG and HisZ subunits.

It localises to the cytoplasm. The enzyme catalyses 1-(5-phospho-beta-D-ribosyl)-ATP + diphosphate = 5-phospho-alpha-D-ribose 1-diphosphate + ATP. Its pathway is amino-acid biosynthesis; L-histidine biosynthesis; L-histidine from 5-phospho-alpha-D-ribose 1-diphosphate: step 1/9. In terms of biological role, catalyzes the condensation of ATP and 5-phosphoribose 1-diphosphate to form N'-(5'-phosphoribosyl)-ATP (PR-ATP). Has a crucial role in the pathway because the rate of histidine biosynthesis seems to be controlled primarily by regulation of HisG enzymatic activity. In Gloeothece citriformis (strain PCC 7424) (Cyanothece sp. (strain PCC 7424)), this protein is ATP phosphoribosyltransferase.